Here is a 144-residue protein sequence, read N- to C-terminus: Large ribosomal subunit protein uL15 (144 aa).

Residues 1 to 44 are disordered; it reads MNLNELQPAAGSRHVRNRVGRGTSSGNGKTSGRGQKGQKARGKV. Positions 23 to 35 are enriched in gly residues; sequence TSSGNGKTSGRGQ.

Belongs to the universal ribosomal protein uL15 family. In terms of assembly, part of the 50S ribosomal subunit.

Binds to the 23S rRNA. This Leuconostoc mesenteroides subsp. mesenteroides (strain ATCC 8293 / DSM 20343 / BCRC 11652 / CCM 1803 / JCM 6124 / NCDO 523 / NBRC 100496 / NCIMB 8023 / NCTC 12954 / NRRL B-1118 / 37Y) protein is Large ribosomal subunit protein uL15.